The chain runs to 564 residues: MFS-type transporter dmxR4 (564 aa).

The disordered stretch occupies residues 1–61 (MSSERPDGSA…PAKEAPAKPA (61 aa)). The segment covering 25-44 (TDSSRTSNDASQTSQDTAVQ) has biased composition (polar residues). Basic and acidic residues predominate over residues 47–57 (PPKEAPAKEAP). Transmembrane regions (helical) follow at residues 71–91 (IALL…DRSI), 106–126 (AGDI…FQLL), 138–158 (TVFV…GAAP), 169–189 (LAGI…VFLI), and 199–219 (GLFG…GGGF). N222 carries an N-linked (GlcNAc...) asparagine glycan. 7 consecutive transmembrane segments (helical) span residues 227-247 (WCFY…ALWM), 265-285 (GLDL…LLAL), 299-319 (IIAL…LQAF), 348-368 (GVHL…GGFF), 376-396 (SPLA…IYTF), 405-425 (WIGS…APNL), and 438-458 (SALA…VSVG). The N-linked (GlcNAc...) asparagine glycan is linked to N469. Transmembrane regions (helical) follow at residues 470–490 (LSWI…VSFL) and 512–532 (VFMI…SMEW). A disordered region spans residues 534–564 (SVKSRGSWDEKPAAKPTDKPTEEKKVPPEAV). Residues 539–564 (GSWDEKPAAKPTDKPTEEKKVPPEAV) show a composition bias toward basic and acidic residues.

Belongs to the major facilitator superfamily. TCR/Tet family.

It localises to the membrane. MFS-type transporter; part of the gene cluster that mediates the biosynthesis of the dimeric xanthones cryptosporioptides. The sequence is that of MFS-type transporter dmxR4 from Cryptosporiopsis sp. (strain 8999).